A 236-amino-acid polypeptide reads, in one-letter code: Small ribosomal subunit protein uS2c (236 aa).

The protein belongs to the universal ribosomal protein uS2 family.

The protein resides in the plastid. It is found in the chloroplast. The sequence is that of Small ribosomal subunit protein uS2c (rps2) from Lolium perenne (Perennial ryegrass).